The primary structure comprises 141 residues: Proteasome maturation protein (141 aa).

A Glycyl lysine isopeptide (Lys-Gly) (interchain with G-Cter in SUMO2) cross-link involves residue K39. Residues 68–72 carry the High-affinity association with the preproteasome motif; it reads RNIQG.

The protein belongs to the POMP/UMP1 family. Constituent of preproteasomes, but not of mature 20S proteasomes. Within the preproteasome, may directly interact with PSMB1/beta6, PSMB4/beta7, PSMB5/beta5, PSMB6/beta1 and PSMB9/beta1i. Interaction with PSMB8/beta5i has been observed in PubMed:10973495, but not in PubMed:10926487. Forms tetramers. In terms of tissue distribution, strongly expressed from the basal layer to the granular layer of healthy epidermis, whereas in KLICK patients there is a gradual decrease of expression toward the granular layer.

The protein resides in the cytoplasm. The protein localises to the cytosol. It is found in the nucleus. It localises to the microsome membrane. Functionally, molecular chaperone essential for the assembly of standard proteasomes and immunoproteasomes. Degraded after completion of proteasome maturation. Mediates the association of 20S preproteasome with the endoplasmic reticulum. The chain is Proteasome maturation protein from Homo sapiens (Human).